A 141-amino-acid polypeptide reads, in one-letter code: MAKKVVGEIKLQIPAGKANPSPPVGPALGQRGVNIMEFCKAFNERTKDMGSFNIPVIITVYQDKSFTFITKKPPVTDLIKKASGVEKGSDNPLKNKVAKLTHKQVEEIAQLKMEDLNTSTMEAAKKIVMGSARSMGVEIVD.

It belongs to the universal ribosomal protein uL11 family. In terms of assembly, part of the ribosomal stalk of the 50S ribosomal subunit. Interacts with L10 and the large rRNA to form the base of the stalk. L10 forms an elongated spine to which L12 dimers bind in a sequential fashion forming a multimeric L10(L12)X complex. Post-translationally, one or more lysine residues are methylated.

Forms part of the ribosomal stalk which helps the ribosome interact with GTP-bound translation factors. This is Large ribosomal subunit protein uL11 from Helicobacter acinonychis (strain Sheeba).